Reading from the N-terminus, the 248-residue chain is Tabinhibitin 10 (248 aa).

A signal peptide spans 1–22 (MTLKRIFCAALALIVLQSVASA). Residues 66-208 (LQKTNWLRGV…NYKGAFHCSL (143 aa)) enclose the SCP domain. Residues 221–223 (RGD) carry the Cell attachment site motif.

The protein belongs to the CRISP family. Expressed in salivary glands.

It is found in the secreted. In terms of biological role, inhibits platelet aggregation induced by all agonists tested (ADP, arachidonic acid, the thromboxane A2 analog U46619, thrombin, and snake venom snaclecs (TMVA that activates platelet through GPIB, and stejnulxin that specifically acts through GPVI (GP6))). May act by competing with fibrinogen for binding to glycoprotein IIb/IIIa (ITGA2B/ITGB3). The sequence is that of Tabinhibitin 10 from Tabanus yao (Horsefly).